The following is an 81-amino-acid chain: U10-myrmicitoxin-Mri1b (81 aa).

The N-terminal stretch at 1 to 26 is a signal peptide; the sequence is MRLSYISLTLAIIFVMAIVHAPETEA. Residues 27 to 52 constitute a propeptide that is removed on maturation; it reads KAYPEADAVAEAIAVGEADAVGVADP. Position 80 is a valine amide (V80).

Belongs to the formicidae venom precursor-01 superfamily. In terms of tissue distribution, expressed by the venom gland.

The protein localises to the secreted. Functionally, induces paralysis after injection into blowflies (L.caesar), and then death within 24 hours. May have antimicrobial properties, like most ant linear peptides. The chain is U10-myrmicitoxin-Mri1b from Manica rubida (European giant red ant).